The chain runs to 311 residues: Ribosomal protein L11 methyltransferase (311 aa).

S-adenosyl-L-methionine-binding residues include threonine 162, glycine 183, aspartate 205, and asparagine 248.

Belongs to the methyltransferase superfamily. PrmA family.

It localises to the cytoplasm. It catalyses the reaction L-lysyl-[protein] + 3 S-adenosyl-L-methionine = N(6),N(6),N(6)-trimethyl-L-lysyl-[protein] + 3 S-adenosyl-L-homocysteine + 3 H(+). Its function is as follows. Methylates ribosomal protein L11. The chain is Ribosomal protein L11 methyltransferase from Bacillus velezensis (strain DSM 23117 / BGSC 10A6 / LMG 26770 / FZB42) (Bacillus amyloliquefaciens subsp. plantarum).